A 410-amino-acid polypeptide reads, in one-letter code: Dipeptidase 1 (410 aa).

Residues 1 to 16 form the signal peptide; that stretch reads MVIIWWFWSLLAICAS. His-36 and Asp-38 together coordinate Zn(2+). A disulfide bond links Cys-87 and Cys-170. A glycan (N-linked (GlcNAc...) asparagine) is linked at Asn-121. Glu-141 is a binding site for Zn(2+). Residue His-168 coordinates substrate. Positions 214 and 235 each coordinate Zn(2+). Cysteines 242 and 274 form a disulfide. Position 246 (Arg-246) interacts with substrate. The N-linked (GlcNAc...) asparagine glycan is linked to Asn-258. Asp-304 serves as a coordination point for substrate. An N-linked (GlcNAc...) asparagine glycan is attached at Asn-332. Residue Ser-384 is the site of GPI-anchor amidated serine attachment. The propeptide at 385-410 is removed in mature form; sequence QAHSIHLQTGALVASLASLLFRLHLL.

It belongs to the metallo-dependent hydrolases superfamily. Peptidase M19 family. Homodimer; disulfide-linked. It depends on Zn(2+) as a cofactor. As to expression, expressed in heart, lung, skeletal muscle, kidney, liver, and testis. Not detected in brain and spleen.

Its subcellular location is the apical cell membrane. The protein resides in the cell projection. The protein localises to the microvillus membrane. It catalyses the reaction an L-aminoacyl-L-amino acid + H2O = 2 an L-alpha-amino acid. The enzyme catalyses leukotriene D4 + H2O = leukotriene E4 + glycine. The catalysed reaction is L-cystine-bis-glycine + 2 H2O = L-cystine + 2 glycine. It carries out the reaction a beta-lactam + H2O = a substituted beta-amino acid. It catalyses the reaction glycyldehydrophenylalanine + H2O = 2,3-didehydrophenylalanine + glycine. Inhibited by L-penicillamine. Inhibited by cilastatin. Hydrolyzes a wide range of dipeptides including the conversion of leukotriene D4 to leukotriene E4. Hydrolyzes cystinyl-bis-glycine (cys-bis-gly) formed during glutathione degradation. Also possesses beta lactamase activity and hydrolytically inactivates beta-lactam antibiotics. Its function is as follows. Independently of its dipeptidase activity, acts as an adhesion receptor for neutrophil recruitment from bloodstream into inflamed lungs and liver. The sequence is that of Dipeptidase 1 (Dpep1) from Mus musculus (Mouse).